Reading from the N-terminus, the 60-residue chain is Large ribosomal subunit protein uL30 (60 aa).

It belongs to the universal ribosomal protein uL30 family. In terms of assembly, part of the 50S ribosomal subunit.

In Bacillus mycoides (strain KBAB4) (Bacillus weihenstephanensis), this protein is Large ribosomal subunit protein uL30.